The following is a 650-amino-acid chain: MAIQVLPPQLANQIAAGEVVERPASVIKELVENSLDAGATRVDIDIDKGGSKLIRIRDNGGGIPKAELALALARHATSKVQTLEDLEAILSFGFRGEALASISSVSRLTLTSRTTEQAEAWQAYAEGSEVAIRVMPAAHPVGTTIEVADLFFNTPARRRFLKSDKTEFTHIDEWLKRIALIRSDVHFSLSHNGKPVRQYRCAATDTQYLQRLAQVAGRAFADSAIKVDCQHDGMGLSGYLQSPALSDMVDCHYFYVNGRLIRDRLVNHAVRQAFGELGTFEQPAFVLSLTLDPHQVDVNVHPAKHEVRFHQARYVHDFILQVLQSALSQMQDLPLAEELPRAQESPASVREHTAGYAPYTFNRDAATEAAGVLSSLPDTQRSQRQPEKAASGQRSSVDAGLSQGSSAHRASQTGLGQSGNAATFETSERHGSGYSGAGQGQRYVRDQLSGQQRQAAQYYAELLHTPEVVSTSGSLQAGLPMPPLLAGRYWVLAQDEHLRLLSISDAAKALVVQEILSKLPTGLVGQPLLMPVAVAADADWTMILAERESLLRRLGLELTIRYQQLIIKKVPPYLRDSQLAKLIPEFLEWIKLEVPADEALCHWLAQYVTGFDAAPKVWQRIQSLEATERNKILESARDLPWQTWLDEYKH.

Positions serine 374–asparagine 420 are disordered. Over residues glycine 392–asparagine 420 the composition is skewed to polar residues.

It belongs to the DNA mismatch repair MutL/HexB family.

Its function is as follows. This protein is involved in the repair of mismatches in DNA. It is required for dam-dependent methyl-directed DNA mismatch repair. May act as a 'molecular matchmaker', a protein that promotes the formation of a stable complex between two or more DNA-binding proteins in an ATP-dependent manner without itself being part of a final effector complex. This chain is DNA mismatch repair protein MutL, found in Shewanella amazonensis (strain ATCC BAA-1098 / SB2B).